Reading from the N-terminus, the 178-residue chain is FXYD domain-containing ion transport regulator 5 (178 aa).

A signal peptide spans 1–21 (MSPPSQLCLLTIVALILPSEG). A disordered region spans residues 21–126 (GQTPEKPRSS…YMPPSYIENP (106 aa)). Topologically, residues 22–146 (QTPEKPRSSF…YDNTTLRKRG (125 aa)) are extracellular. Residues 29-58 (SSFTAHQSSVTTHVPVPDQTSPGVQTTPPI) show a composition bias toward polar residues. A compositionally biased stretch (low complexity) spans 70–79 (QTAAKTKTQQ). Residues 147 to 164 (LLVAAVLFITGIIILTSG) form a helical membrane-spanning segment. Residues 165–178 (KCRQFSQLCLNRHR) lie on the Cytoplasmic side of the membrane.

The protein belongs to the FXYD family. Regulatory subunit of the sodium/potassium-transporting ATPase which is composed of a catalytic alpha subunit, a non-catalytic beta subunit and an additional regulatory subunit. The regulatory subunit, a member of the FXYD protein family, modulates the enzymatic activity in a tissue- and isoform-specific way by changing affinities of the Na+/K+-ATPase toward Na(+), K(+) or ATP. Post-translationally, glycosylated. Spleen, lung, skeletal muscle, and testis.

The protein localises to the cell membrane. Its subcellular location is the basolateral cell membrane. In terms of biological role, associates with and regulates the activity of the sodium/potassium-transporting ATPase (NKA) which catalyzes the hydrolysis of ATP coupled with the exchange of Na(+) and K(+) ions across the plasma membrane. May increase NKA activity by increasing the apparent affinity for Na(+). Involved in down-regulation of E-cadherin which results in reduced cell adhesion. Promotes metastasis. The protein is FXYD domain-containing ion transport regulator 5 (Fxyd5) of Rattus norvegicus (Rat).